The sequence spans 1376 residues: DNA-directed RNA polymerase subunit beta'' (1376 aa).

Residues Cys221, Cys290, Cys297, and Cys300 each coordinate Zn(2+). The tract at residues 895 to 919 is disordered; the sequence is PSGSGFPSDNELDHSNRNPFSSSYP.

This sequence belongs to the RNA polymerase beta' chain family. RpoC2 subfamily. In plastids the minimal PEP RNA polymerase catalytic core is composed of four subunits: alpha, beta, beta', and beta''. When a (nuclear-encoded) sigma factor is associated with the core the holoenzyme is formed, which can initiate transcription. The cofactor is Zn(2+).

It is found in the plastid. Its subcellular location is the chloroplast. It catalyses the reaction RNA(n) + a ribonucleoside 5'-triphosphate = RNA(n+1) + diphosphate. In terms of biological role, DNA-dependent RNA polymerase catalyzes the transcription of DNA into RNA using the four ribonucleoside triphosphates as substrates. In Pelargonium hortorum (Common geranium), this protein is DNA-directed RNA polymerase subunit beta''.